Consider the following 150-residue polypeptide: Transcriptional regulator MraZ (150 aa).

SpoVT-AbrB domains are found at residues 5–52 and 81–124; these read VTHL…PLPD and AHDL…DAEA.

It belongs to the MraZ family. In terms of assembly, forms oligomers.

It localises to the cytoplasm. Its subcellular location is the nucleoid. The sequence is that of Transcriptional regulator MraZ from Alkalilimnicola ehrlichii (strain ATCC BAA-1101 / DSM 17681 / MLHE-1).